The sequence spans 243 residues: MNNIIHNDAPTPWGIYFQDGASPVYDGIVELHDQVLFYLLIVLVGVSWILFSTILRFRGSGIVHKYHNHSTTIEFVWTVSPALLLIAIAFPSFKLLYLMDEVIDPSITIKAIGHQWYWSYEYSDYTDKEGQSIEFDSYMLPTEDLEEGQLRQLEVDNRVLVPVNTPLRFIITATDVLHDFAVPSLGIKVDASPGRLNQVSTYVQREGVYYGQCSELCGVLHSSMPIVIEAVSLEKFLSWLDNQ.

At 1 to 34 (MNNIIHNDAPTPWGIYFQDGASPVYDGIVELHDQ) the chain is on the mitochondrial intermembrane side. Residues 35-55 (VLFYLLIVLVGVSWILFSTIL) traverse the membrane as a helical segment. At 56-74 (RFRGSGIVHKYHNHSTTIE) the chain is on the mitochondrial matrix side. The chain crosses the membrane as a helical span at residues 75-97 (FVWTVSPALLLIAIAFPSFKLLY). Topologically, residues 98-243 (LMDEVIDPSI…EKFLSWLDNQ (146 aa)) are mitochondrial intermembrane. The Cu cation site is built by His178, Cys213, Glu215, Cys217, His221, and Met224. A Mg(2+)-binding site is contributed by Glu215.

This sequence belongs to the cytochrome c oxidase subunit 2 family. In terms of assembly, component of the cytochrome c oxidase (complex IV, CIV), a multisubunit enzyme composed of a catalytic core of 3 subunits and several supernumerary subunits. The complex exists as a monomer or a dimer and forms supercomplexes (SCs) in the inner mitochondrial membrane with ubiquinol-cytochrome c oxidoreductase (cytochrome b-c1 complex, complex III, CIII). Cu cation serves as cofactor.

The protein resides in the mitochondrion inner membrane. It carries out the reaction 4 Fe(II)-[cytochrome c] + O2 + 8 H(+)(in) = 4 Fe(III)-[cytochrome c] + 2 H2O + 4 H(+)(out). In terms of biological role, component of the cytochrome c oxidase, the last enzyme in the mitochondrial electron transport chain which drives oxidative phosphorylation. The respiratory chain contains 3 multisubunit complexes succinate dehydrogenase (complex II, CII), ubiquinol-cytochrome c oxidoreductase (cytochrome b-c1 complex, complex III, CIII) and cytochrome c oxidase (complex IV, CIV), that cooperate to transfer electrons derived from NADH and succinate to molecular oxygen, creating an electrochemical gradient over the inner membrane that drives transmembrane transport and the ATP synthase. Cytochrome c oxidase is the component of the respiratory chain that catalyzes the reduction of oxygen to water. Electrons originating from reduced cytochrome c in the intermembrane space (IMS) are transferred via the dinuclear copper A center (CU(A)) of subunit 2 and heme A of subunit 1 to the active site in subunit 1, a binuclear center (BNC) formed by heme A3 and copper B (CU(B)). The BNC reduces molecular oxygen to 2 water molecules using 4 electrons from cytochrome c in the IMS and 4 protons from the mitochondrial matrix. This Pneumocystis carinii protein is Cytochrome c oxidase subunit 2.